Consider the following 723-residue polypeptide: MNPTEAKAIPGSKQLEGPHSPNKKRHKKQAVKTEPEKKSQSTKPSVVHEKKTQEVKPKEHTEPKSQPKHPSDTRSKHAPKEKAVSKSSEQPPSEKSTKPKTKSQDEISGGGKSAVPAVAAAASAEPADKNKESKLLTSAVPVESKPSKPSAKSDMDTALDDLIDTLGEPEETKEDTTTYTGPEVSDPMSSTYIEELGKREVTLPPKYRELLNKEEGIAGPPPDSSKPLGPNDAIDALSSDFTCSSPTADAKKTEKEKSTEEALKAQSAGVIRSAAPPKEKRRKVEEDTMTEQALEALSASLGTRKPRPELDPSSIKEVDEAKAKEEKVKKCGEDEERVPSEYRLKPATDKDGKPLLPEAEEKPKPLSESELIDELSEDFDRSKCKEKQSKPTEKNRGIPGRCPRACARGCASDLHVFCAVSSTHSSSSEGMVPDDAVEALAGSLGKKEADPEDGKPVEDKVKEKAKEEDREKLGEREETIPPDYRLEEAKDKDGKPLPPKEVKEPLPPLSEDFLLDALSKDFTVPSDTSSPQFEDAKLSVVVSEVVSQTPAPTTQAAGPPRDSARDNKELDDALDQLSDSLGQRQPDPDEHKPVEDKVKEKAKAEHRDKLGERDDTIPPKYQHLLDDNKEGTPGKPKRSESPRHQRSPRHQRNLQVPRTPLTPSQGTWTAVPQLQKPQQTQQRTKTRSLLPSDKAPRNGGKAKDSTKAKEETSKPKADGKSTS.

Disordered regions lie at residues 1 to 402 (MNPT…PGRC) and 422 to 509 (STHS…LPPL). The segment covering 21–30 (PNKKRHKKQA) has biased composition (basic residues). Lys32 is covalently cross-linked (Glycyl lysine isopeptide (Lys-Gly) (interchain with G-Cter in SUMO2)). The span at 46–84 (VVHEKKTQEVKPKEHTEPKSQPKHPSDTRSKHAPKEKAV) shows a compositional bias: basic and acidic residues. Lys50 bears the N6-acetyllysine mark. Low complexity-rich tracts occupy residues 85–94 (SKSSEQPPSE) and 113–125 (SAVP…ASAE). A Phosphoserine modification is found at Ser87. Thr137 is subject to Phosphothreonine. Residues 157-173 (TALDDLIDTLGEPEETK) are compositionally biased toward acidic residues. An Inhibitory domain 1 repeat occupies 171 to 224 (ETKEDTTTYTGPEVSDPMSSTYIEELGKREVTLPPKYRELLNKEEGIAGPPPDS). The span at 195–216 (ELGKREVTLPPKYRELLNKEEG) shows a compositional bias: basic and acidic residues. Ser224 and Ser245 each carry phosphoserine. Basic and acidic residues-rich tracts occupy residues 249–263 (DAKK…EEAL) and 306–367 (PRPE…KPLS). An Inhibitory domain 2 repeat occupies 307–359 (RPELDPSSIKEVDEAKAKEEKVKKCGEDEERVPSEYRLKPATDKDGKPLLPEA). Ser367, Ser369, and Ser376 each carry phosphoserine. Positions 378 to 396 (DFDRSKCKEKQSKPTEKNR) are enriched in basic and acidic residues. Position 443 is a phosphoserine (Ser443). Residues 445-504 (GKKEADPEDGKPVEDKVKEKAKEEDREKLGEREETIPPDYRLEEAKDKDGKPLPPKEVKE) show a composition bias toward basic and acidic residues. Residues 449–502 (ADPEDGKPVEDKVKEKAKEEDREKLGEREETIPPDYRLEEAKDKDGKPLPPKEV) form an Inhibitory domain 3 repeat. A phosphoserine mark is found at Ser519 and Ser530. The interval 547-723 (SQTPAPTTQA…KPKADGKSTS (177 aa)) is disordered. Residues 548–560 (QTPAPTTQAAGPP) show a composition bias toward low complexity. The span at 562–571 (DSARDNKELD) shows a compositional bias: basic and acidic residues. Phosphoserine is present on residues Ser578 and Ser580. The Inhibitory domain 4 repeat unit spans residues 586-642 (PDPDEHKPVEDKVKEKAKAEHRDKLGERDDTIPPKYQHLLDDNKEGTPGKPKRSESP). A compositionally biased stretch (basic and acidic residues) spans 586–643 (PDPDEHKPVEDKVKEKAKAEHRDKLGERDDTIPPKYQHLLDDNKEGTPGKPKRSESPR). Residues 653–670 (NLQVPRTPLTPSQGTWTA) show a composition bias toward polar residues. Over residues 672–690 (PQLQKPQQTQQRTKTRSLL) the composition is skewed to low complexity. Residues 701 to 723 (KAKDSTKAKEETSKPKADGKSTS) are compositionally biased toward basic and acidic residues.

This sequence belongs to the protease inhibitor I27 (calpastatin) family.

Functionally, specific inhibition of calpain (calcium-dependent cysteine protease). Plays a key role in postmortem tenderization of meat and have been proposed to be involved in muscle protein degradation in living tissue. This Ovis aries (Sheep) protein is Calpastatin (CAST).